The following is a 1575-amino-acid chain: Ras GTPase-activating-like protein IQGAP2 (1575 aa).

Residue Ser-16 is modified to Phosphoserine. One can recognise a Calponin-homology (CH) domain in the interval 41-156 (LCHLEEAKRW…YCIHALSLYL (116 aa)). Thr-356 is modified (phosphothreonine). In terms of domain architecture, WW spans 594–627 (ESSEGSWVTLNVQEKYNYYYNTDSKEGSWVPPEL). Phosphoserine is present on residues Ser-595 and Ser-599. 3 consecutive IQ domains span residues 690–719 (QTES…VFAG), 720–749 (NVDS…YFED), and 750–779 (HKNE…SENP). A phosphothreonine mark is found at Thr-782, Thr-881, Thr-1002, and Thr-1269. A Ras-GAP domain is found at 933–1182 (YLLLKLFKTA…QEFRKYFQEA (250 aa)). Phosphoserine is present on residues Ser-1279 and Ser-1461.

Its function is as follows. Binds to activated CDC42 and RAC1 but does not seem to stimulate their GTPase activity. Associates with calmodulin. The polypeptide is Ras GTPase-activating-like protein IQGAP2 (Iqgap2) (Mus musculus (Mouse)).